A 355-amino-acid polypeptide reads, in one-letter code: tRNA (guanine-N(1)-)-methyltransferase (355 aa).

S-adenosyl-L-methionine is bound by residues G109 and 129–134 (IGDYVL).

It belongs to the RNA methyltransferase TrmD family. Homodimer.

Its subcellular location is the cytoplasm. The enzyme catalyses guanosine(37) in tRNA + S-adenosyl-L-methionine = N(1)-methylguanosine(37) in tRNA + S-adenosyl-L-homocysteine + H(+). Functionally, specifically methylates guanosine-37 in various tRNAs. The chain is tRNA (guanine-N(1)-)-methyltransferase from Chlamydia caviae (strain ATCC VR-813 / DSM 19441 / 03DC25 / GPIC) (Chlamydophila caviae).